Reading from the N-terminus, the 450-residue chain is MGKYFGTDGVRGEANLELTPELAFKLGRFGGYVLSQHETEAPKVFVGRDTRISGEMLESALVAGLLSVGIHVYKLGVLATPAVAYLVETEGASAGVMISASHNPALDNGIKFFGGDGFKLDDEKEAEIEALLDAEEDTLPRPSAEGLGILVDYPEGLRKYEGYLVSTGTPLDGMKVALDTANGAASTSARQIFADLGAQLTVIGETPDGLNINLNVGSTHPEALQEVVKESGSAIGLAFDGDSDRLIAVDENGDIVDGDKIMYIIGKYLSKKGQLAQNTIVTTVMSNLGFHKALNREGINKAVTAVGDRYVVEEMRKSGYNLGGEQSGHVILMDYNTTGDGQLSAVQLTKIMKETGKSLSELAAEVTIYPQKLVNIRVENVMKEKAMEVPAIKAIIEKMEEEMAGNGRILVRPSGTEPLLRVMAEAPTTEEVDYYVDTITDVVRAEIGID.

Serine 101 acts as the Phosphoserine intermediate in catalysis. Mg(2+) contacts are provided by serine 101, aspartate 240, aspartate 242, and aspartate 244. Serine 101 is subject to Phosphoserine.

Belongs to the phosphohexose mutase family. The cofactor is Mg(2+). In terms of processing, activated by phosphorylation. Phosphorylated by StkP in vivo.

The catalysed reaction is alpha-D-glucosamine 1-phosphate = D-glucosamine 6-phosphate. Catalyzes the conversion of glucosamine-6-phosphate to glucosamine-1-phosphate. This chain is Phosphoglucosamine mutase, found in Streptococcus pneumoniae (strain ATCC BAA-255 / R6).